A 411-amino-acid chain; its full sequence is LL-diaminopimelate aminotransferase (411 aa).

Substrate contacts are provided by Tyr15 and Gly42. Pyridoxal 5'-phosphate-binding positions include Tyr72, 108–109, Tyr132, Asn187, Tyr218, and 246–248; these read SK and SFS. The substrate site is built by Lys109, Tyr132, and Asn187. Lys249 is subject to N6-(pyridoxal phosphate)lysine. Residues Arg257 and Asn292 each coordinate pyridoxal 5'-phosphate. Residues Asn292 and Arg388 each contribute to the substrate site.

The protein belongs to the class-I pyridoxal-phosphate-dependent aminotransferase family. LL-diaminopimelate aminotransferase subfamily. In terms of assembly, homodimer. It depends on pyridoxal 5'-phosphate as a cofactor.

The catalysed reaction is (2S,6S)-2,6-diaminopimelate + 2-oxoglutarate = (S)-2,3,4,5-tetrahydrodipicolinate + L-glutamate + H2O + H(+). The protein operates within amino-acid biosynthesis; L-lysine biosynthesis via DAP pathway; LL-2,6-diaminopimelate from (S)-tetrahydrodipicolinate (aminotransferase route): step 1/1. In terms of biological role, involved in the synthesis of meso-diaminopimelate (m-DAP or DL-DAP), required for both lysine and peptidoglycan biosynthesis. Catalyzes the direct conversion of tetrahydrodipicolinate to LL-diaminopimelate. The chain is LL-diaminopimelate aminotransferase from Cyanothece sp. (strain PCC 7425 / ATCC 29141).